Reading from the N-terminus, the 392-residue chain is Phosphoglycerate kinase (392 aa).

Substrate-binding positions include 19–21, Arg34, 57–60, Arg116, and Arg149; these read DYN and HLGR. ATP-binding positions include Lys199, Glu321, and 347–350; that span reads GGDS.

This sequence belongs to the phosphoglycerate kinase family. Monomer.

It is found in the cytoplasm. It catalyses the reaction (2R)-3-phosphoglycerate + ATP = (2R)-3-phospho-glyceroyl phosphate + ADP. It participates in carbohydrate degradation; glycolysis; pyruvate from D-glyceraldehyde 3-phosphate: step 2/5. This chain is Phosphoglycerate kinase, found in Thermomicrobium roseum (strain ATCC 27502 / DSM 5159 / P-2).